The chain runs to 186 residues: Tumor necrosis factor, alpha-induced protein 8-like protein 2 A (186 aa).

Belongs to the TNFAIP8 family. TNFAIP8L2 subfamily.

In terms of biological role, acts as a negative regulator of innate and adaptive immunity by maintaining immune homeostasis. Negative regulator of Toll-like receptor and T-cell receptor function. Prevents hyperresponsiveness of the immune system and maintains immune homeostasis. Inhibits jun/ap1 and NF-kappa-B activation. Promotes Fas-induced apoptosis. The protein is Tumor necrosis factor, alpha-induced protein 8-like protein 2 A (tnfaip8l2a) of Danio rerio (Zebrafish).